The following is a 1044-amino-acid chain: Isoleucine--tRNA ligase (1044 aa).

The 'HIGH' region signature appears at 48–58 (PFATGLPHFGH). The short motif at 594–598 (KMSKS) is the 'KMSKS' region element. Position 597 (Lys-597) interacts with ATP.

It belongs to the class-I aminoacyl-tRNA synthetase family. IleS type 2 subfamily. As to quaternary structure, monomer. It depends on Zn(2+) as a cofactor.

The protein localises to the cytoplasm. The catalysed reaction is tRNA(Ile) + L-isoleucine + ATP = L-isoleucyl-tRNA(Ile) + AMP + diphosphate. Its function is as follows. Catalyzes the attachment of isoleucine to tRNA(Ile). As IleRS can inadvertently accommodate and process structurally similar amino acids such as valine, to avoid such errors it has two additional distinct tRNA(Ile)-dependent editing activities. One activity is designated as 'pretransfer' editing and involves the hydrolysis of activated Val-AMP. The other activity is designated 'posttransfer' editing and involves deacylation of mischarged Val-tRNA(Ile). The sequence is that of Isoleucine--tRNA ligase from Borrelia turicatae (strain 91E135).